The primary structure comprises 684 residues: ATP-dependent zinc metalloprotease FtsH (684 aa).

At 1-21 (MENKNDMFNKTPKSGKPKMFR) the chain is on the cytoplasmic side. The helical transmembrane segment at 22 to 42 (FNLYWMYGLIFIMLVALYMTN) threads the bilayer. The Periplasmic segment spans residues 43-138 (DSSGTKELGW…QVRFEEGDDA (96 aa)). The chain crosses the membrane as a helical span at residues 139 to 159 (IWNFLVSFGPIILLIGVWMFL). The Cytoplasmic portion of the chain corresponds to 160–684 (MRRMSGGTGA…TEENKTGKIA (525 aa)). 236 to 243 (GPPGTGKT) contacts ATP. Zn(2+) is bound at residue histidine 459. The active site involves glutamate 460. 2 residues coordinate Zn(2+): histidine 463 and aspartate 534. Residues 647–662 (EKANGKNKENADKEAE) are compositionally biased toward basic and acidic residues. Positions 647-684 (EKANGKNKENADKEAEADATTENVTDTPTEENKTGKIA) are disordered.

The protein in the central section; belongs to the AAA ATPase family. This sequence in the C-terminal section; belongs to the peptidase M41 family. Homohexamer. It depends on Zn(2+) as a cofactor.

It localises to the cell inner membrane. Its function is as follows. Acts as a processive, ATP-dependent zinc metallopeptidase for both cytoplasmic and membrane proteins. Plays a role in the quality control of integral membrane proteins. The polypeptide is ATP-dependent zinc metalloprotease FtsH (Parabacteroides distasonis (strain ATCC 8503 / DSM 20701 / CIP 104284 / JCM 5825 / NCTC 11152)).